The primary structure comprises 110 residues: Iron-sulfur cluster assembly protein CyaY (110 aa).

The protein belongs to the frataxin family.

In terms of biological role, involved in iron-sulfur (Fe-S) cluster assembly. May act as a regulator of Fe-S biogenesis. This is Iron-sulfur cluster assembly protein CyaY from Pseudomonas putida (strain GB-1).